A 446-amino-acid chain; its full sequence is C4-dicarboxylate transport protein 2 (446 aa).

The next 10 helical transmembrane spans lie at 7–26, 46–64, 77–99, 152–171, 192–211, 221–243, 291–313, 318–340, 353–375, and 381–403; these read PLFG…GIWA, MLIA…CGAG, VIYF…YAFG, ILQV…LLGE, AVVI…FTVG, LGFL…LGGI, VVGL…YLTL, IAQA…VALI, IVIL…VLVL, and IGIA…IAAW.

Belongs to the dicarboxylate/amino acid:cation symporter (DAACS) (TC 2.A.23) family.

It localises to the cell inner membrane. Responsible for the transport of dicarboxylates such as succinate, fumarate, and malate from the periplasm across the membrane. The protein is C4-dicarboxylate transport protein 2 (dctA2) of Ralstonia nicotianae (strain ATCC BAA-1114 / GMI1000) (Ralstonia solanacearum).